The chain runs to 321 residues: Probable arabinan endo-1,5-alpha-L-arabinosidase A (321 aa).

An N-terminal signal peptide occupies residues 1 to 19 (MHPSTFVTTIACLAGLAHG). Catalysis depends on D34, which acts as the Proton acceptor. E200 acts as the Proton donor in catalysis.

The protein belongs to the glycosyl hydrolase 43 family.

It is found in the secreted. The enzyme catalyses Endohydrolysis of (1-&gt;5)-alpha-arabinofuranosidic linkages in (1-&gt;5)-arabinans.. The protein operates within glycan metabolism; L-arabinan degradation. Functionally, endo-1,5-alpha-L-arabinanase involved in degradation of pectin. Its preferred substrate is linear 1,5-alpha-L-arabinan. In Aspergillus clavatus (strain ATCC 1007 / CBS 513.65 / DSM 816 / NCTC 3887 / NRRL 1 / QM 1276 / 107), this protein is Probable arabinan endo-1,5-alpha-L-arabinosidase A (abnA).